The following is a 122-amino-acid chain: Large ribosomal subunit protein uL18 (122 aa).

Belongs to the universal ribosomal protein uL18 family. Part of the 50S ribosomal subunit; part of the 5S rRNA/L5/L18/L25 subcomplex. Contacts the 5S and 23S rRNAs.

Its function is as follows. This is one of the proteins that bind and probably mediate the attachment of the 5S RNA into the large ribosomal subunit, where it forms part of the central protuberance. This Thermotoga neapolitana (strain ATCC 49049 / DSM 4359 / NBRC 107923 / NS-E) protein is Large ribosomal subunit protein uL18.